Consider the following 272-residue polypeptide: HMP-PP phosphatase (272 aa).

The active-site Nucleophile is the Asp-8. Mg(2+) is bound by residues Asp-8, Asp-10, and Asp-212.

The protein belongs to the HAD-like hydrolase superfamily. Cof family. Mg(2+) is required as a cofactor.

It catalyses the reaction 4-amino-2-methyl-5-(diphosphooxymethyl)pyrimidine + H2O = 4-amino-2-methyl-5-(phosphooxymethyl)pyrimidine + phosphate + H(+). In terms of biological role, catalyzes the hydrolysis of 4-amino-2-methyl-5-hydroxymethylpyrimidine pyrophosphate (HMP-PP) to 4-amino-2-methyl-5-hydroxymethylpyrimidine phosphate (HMP-P). This chain is HMP-PP phosphatase, found in Escherichia coli O6:H1 (strain CFT073 / ATCC 700928 / UPEC).